We begin with the raw amino-acid sequence, 232 residues long: Small ribosomal subunit protein uS5 (232 aa).

The segment at 1–47 is disordered; sequence MAAEVTETAQPVETAASTDNNREQREPRRGGRERNPNRDRGNRDADK. The segment covering 7-19 has biased composition (polar residues); the sequence is ETAQPVETAASTD. A compositionally biased stretch (basic and acidic residues) spans 20 to 47; sequence NNREQREPRRGGRERNPNRDRGNRDADK. One can recognise an S5 DRBM domain in the interval 50–113; it reads FLERVVTINR…EEAKKNFFRV (64 aa).

The protein belongs to the universal ribosomal protein uS5 family. In terms of assembly, part of the 30S ribosomal subunit. Contacts proteins S4 and S8.

Functionally, with S4 and S12 plays an important role in translational accuracy. In terms of biological role, located at the back of the 30S subunit body where it stabilizes the conformation of the head with respect to the body. The protein is Small ribosomal subunit protein uS5 of Leifsonia xyli subsp. xyli (strain CTCB07).